Here is a 489-residue protein sequence, read N- to C-terminus: MESTFSSPAEAALQREAGVPGQFTPPEDLDRVYELERVTRFICDLGCQRVALQFPDQLLGDAGAVAARLEEVTGSKMFILGDTAYGSCCVDVLGAEQAGAQALVHFGPACLSPPASLLPITFVLGRRPVALELCAKAFEAQNPDPTALVVLLSEPACAHALEPLATLLRPKYQDLLISSPALPLPVGSLSSQPESLERFGRRFPLNPGRSLEEYGAFYVGASQASSDPNLDPDLSRLLLGWTPGRPFFSCCPDTGQTQDQGAKAGRLRARRLYLVERARDARVVGLLVGTLGVAQHLEALAHLRKLTEAAGKRSYVLALGKPTPAKLANFPEMDVFVLLACPLGALTLQPSGGFFRPILTPCELEAACNPAWPPPGLAPHLTHYAELLPGSPFHVPLPPPESELWDTPDVSLISGELRPPPPWKSSDDTKCSALTPRPQLELAESSPAASFLSSRSWQGLEPRLGQTPVKEAVQGRRGIAIAYEDEGSS.

At M1 the chain carries N-acetylmethionine. A Phosphoserine modification is found at S7. C89, C110, and C341 together coordinate [4Fe-4S] cluster. T435 bears the Phosphothreonine mark. 2 positions are modified to phosphoserine: S446 and S456. T467 bears the Phosphothreonine mark. Position 488 is a phosphoserine (S488).

It belongs to the DPH1/DPH2 family. DPH2 subfamily. Component of the 2-(3-amino-3-carboxypropyl)histidine synthase complex composed of DPH1, DPH2, DPH3 and a NADH-dependent reductase. Interacts with DPH1. It depends on [4Fe-4S] cluster as a cofactor.

The protein operates within protein modification; peptidyl-diphthamide biosynthesis. Functionally, required for the first step of diphthamide biosynthesis, a post-translational modification of histidine which occurs in elongation factor 2. DPH1 and DPH2 transfer a 3-amino-3-carboxypropyl (ACP) group from S-adenosyl-L-methionine (SAM) to a histidine residue, the reaction is assisted by a reduction system comprising DPH3 and a NADH-dependent reductase. Facilitates the reduction of the catalytic iron-sulfur cluster found in the DPH1 subunit. In Rattus norvegicus (Rat), this protein is 2-(3-amino-3-carboxypropyl)histidine synthase subunit 2 (Dph2).